We begin with the raw amino-acid sequence, 138 residues long: Histone H2AX (138 aa).

The tract at residues 1 to 23 (MSTTGKGGKAKGKTASSKQVSRS) is disordered. S2 bears the N-acetylserine mark. N6-acetyllysine is present on residues K6, K9, K11, K13, and K18. The residue at position 123 (S123) is a Phosphoserine. K124 is covalently cross-linked (Glycyl lysine isopeptide (Lys-Gly) (interchain with G-Cter in ubiquitin)). Phosphoserine occurs at positions 125, 130, and 135. A [ST]-Q motif motif is present at residues 135–136 (SQ).

It belongs to the histone H2A family. As to quaternary structure, the nucleosome is a histone octamer containing two molecules each of H2A, H2B, H3 and H4 assembled in one H3-H4 heterotetramer and two H2A-H2B heterodimers. The octamer wraps approximately 147 bp of DNA. In terms of processing, monoubiquitination of Lys-124 gives a specific tag for epigenetic transcriptional repression. Post-translationally, phosphorylated to form H2AX134ph (gamma-H2AX) in response to DNA double-strand breaks (DSBs) generated by exogenous genotoxic agents in both the mitotic MIC and the amitotic MAC. Gamma-H2AX is also found when programmed DNA rearrangements occur, namely homologous recombination in the MIC during prophase of meiosis, and chromosome fragmentation and DNA elimination in developing MACs. Gamma-H2AX is important to recover from exogenous DNA damage and to repair breaks associated with normal micronuclear meiosis and mitosis and macronuclear amitotic division. Acetylation occurs almost exclusively in the MAC.

The protein localises to the nucleus. Its subcellular location is the chromosome. Its function is as follows. Core component of nucleosome which plays a central role in DNA double strand break (DSB) repair. Nucleosomes wrap and compact DNA into chromatin, limiting DNA accessibility to the cellular machineries which require DNA as a template. Histones thereby play a central role in transcription regulation, DNA repair, DNA replication and chromosomal stability. DNA accessibility is regulated via a complex set of post-translational modifications of histones, also called histone code, and nucleosome remodeling. This Tetrahymena thermophila (strain SB210) protein is Histone H2AX (HTA1).